The following is a 577-amino-acid chain: Arginine--tRNA ligase (577 aa).

The short motif at 122 to 132 is the 'HIGH' region element; the sequence is PNVAKEMHVGH.

This sequence belongs to the class-I aminoacyl-tRNA synthetase family. In terms of assembly, monomer.

The protein localises to the cytoplasm. It carries out the reaction tRNA(Arg) + L-arginine + ATP = L-arginyl-tRNA(Arg) + AMP + diphosphate. In Histophilus somni (strain 129Pt) (Haemophilus somnus), this protein is Arginine--tRNA ligase.